A 410-amino-acid polypeptide reads, in one-letter code: Translation initiation factor 2 subunit gamma (410 aa).

A tr-type G domain is found at 6–203 (QSEVNIGMVG…AIQDFIPTPE (198 aa)). Residues 15 to 22 (GHVDHGKT) form a G1 region. Mg(2+) contacts are provided by D18, T22, G43, and S45. Position 18 to 23 (18 to 23 (DHGKTS)) interacts with GTP. A G2 region spans residues 43-47 (GISIR). Zn(2+) is bound by residues C58, C61, C73, and C76. Positions 90–93 (DAPG) are G3. Residues 146-149 (NKID) and 181-183 (SAH) contribute to the GTP site. The tract at residues 146-149 (NKID) is G4. Residues 181-183 (SAH) are G5.

It belongs to the TRAFAC class translation factor GTPase superfamily. Classic translation factor GTPase family. EIF2G subfamily. As to quaternary structure, heterotrimer composed of an alpha, a beta and a gamma chain. Mg(2+) is required as a cofactor.

It catalyses the reaction GTP + H2O = GDP + phosphate + H(+). EIF-2 functions in the early steps of protein synthesis by forming a ternary complex with GTP and initiator tRNA. This Methanococcus maripaludis (strain DSM 14266 / JCM 13030 / NBRC 101832 / S2 / LL) protein is Translation initiation factor 2 subunit gamma.